The primary structure comprises 348 residues: MTAPSQVLKIRRPDDWHLHLRDGDMLKTVVPYTSEIYGRAIVMPNLAPPVTTVEAAVAYRQRILDAVPAGHNFTPLMTCYLTDSLDPNELERGFNEGVFTAAKLYPANATTNSSHGVTSIDAIMPVLERMEKIGMPLLVHGEVTHADIDIFDREARFIESVMEPLRQRLTALKVVFEHITTKDAADYVRDGNERLAATITPQHLMFNRNHMLVGGVRPHLYCLPILKRNIHQQALRELVASGFNRVFLGTDSAPHARHRKESSCGCAGCFNAPTALGSYATVFEEMNALQHFEAFCSVNGPQFYGLPVNDTFIELVREEQQVAESIALTDDTLVPFLAGETVRWSVKQ.

Zn(2+) is bound by residues His-17 and His-19. Substrate is bound by residues His-19–Arg-21 and Asn-45. Zn(2+) is bound by residues Lys-103, His-140, and His-178. Lys-103 bears the N6-carboxylysine mark. His-140 lines the substrate pocket. Leu-223 is a binding site for substrate. Asp-251 is a binding site for Zn(2+). Residue Asp-251 is part of the active site. The substrate site is built by His-255 and Ala-267.

It belongs to the metallo-dependent hydrolases superfamily. DHOase family. Class II DHOase subfamily. In terms of assembly, homodimer. Zn(2+) serves as cofactor.

It catalyses the reaction (S)-dihydroorotate + H2O = N-carbamoyl-L-aspartate + H(+). It participates in pyrimidine metabolism; UMP biosynthesis via de novo pathway; (S)-dihydroorotate from bicarbonate: step 3/3. In terms of biological role, catalyzes the reversible cyclization of carbamoyl aspartate to dihydroorotate. This Escherichia coli O139:H28 (strain E24377A / ETEC) protein is Dihydroorotase.